A 645-amino-acid polypeptide reads, in one-letter code: 1,4-alpha-glucan branching enzyme GlgB (645 aa).

Asp-309 (nucleophile) is an active-site residue. Glu-352 functions as the Proton donor in the catalytic mechanism. Residues 619–645 (VKTRKGSKKQDGSKTKVRSNVTSRGKR) are disordered. Residues 636–645 (RSNVTSRGKR) are compositionally biased toward polar residues.

This sequence belongs to the glycosyl hydrolase 13 family. GlgB subfamily. As to quaternary structure, monomer.

It carries out the reaction Transfers a segment of a (1-&gt;4)-alpha-D-glucan chain to a primary hydroxy group in a similar glucan chain.. Its pathway is glycan biosynthesis; glycogen biosynthesis. Functionally, catalyzes the formation of the alpha-1,6-glucosidic linkages in glycogen by scission of a 1,4-alpha-linked oligosaccharide from growing alpha-1,4-glucan chains and the subsequent attachment of the oligosaccharide to the alpha-1,6 position. The protein is 1,4-alpha-glucan branching enzyme GlgB of Bacillus cereus (strain ATCC 10987 / NRS 248).